The following is a 74-amino-acid chain: CLAVATA3/ESR (CLE)-related protein 1 (74 aa).

Positions 1–22 (MANLKFLLCLFLICVSLSRSSA) are cleaved as a signal peptide. N-linked (GlcNAc...) asparagine glycosylation occurs at asparagine 59. Hydroxyproline is present on residues proline 66 and proline 69. O-linked (Ara...) hydroxyproline glycosylation occurs at proline 69.

This sequence belongs to the CLV3/ESR signal peptide family. Post-translationally, the O-glycosylation (arabinosylation) of the hydroxyproline Pro-69 enhances binding affinity of the CLE1p peptide for its receptor. Mostly expressed in roots and seedlings, and, to a lower extent, in stems and apex.

Its subcellular location is the secreted. It is found in the extracellular space. Extracellular signal peptide that regulates cell fate. The polypeptide is CLAVATA3/ESR (CLE)-related protein 1 (Arabidopsis thaliana (Mouse-ear cress)).